The sequence spans 420 residues: Trophoblast glycoprotein (420 aa).

A signal peptide spans 1 to 34 (MPGGCSRGPAAGDGRLRLARLALVLLGWVSSSSS). Residues 35–355 (TSSASSSSSS…PILPPSLQTS (321 aa)) lie on the Extracellular side of the membrane. The LRRNT domain occupies 53-91 (SAQPPLPDQCPALCECSEAARTVKCVNRNLTEVPTDLPL). Cystine bridges form between cysteine 62-cysteine 68 and cysteine 66-cysteine 77. Asparagine 81 carries an N-linked (GlcNAc...) asparagine glycan. 7 LRR repeats span residues 92-113 (YVRNLFLTGNQLAVLPAGAFAR), 116-139 (PLAELAALNLSGSRLDEVRGGAFE), 141-163 (LPSLRQLDLSHNPLAYLSPFAFS), 172-204 (PSPLVELILNHIVPPDDKRQNRSFEGMVAAALV), 209-232 (LQGLHLLELASNHFLYLPRDVLAQ), 233-255 (LPSLRYLDLSNNSLVSLTYVSFR), and 256-275 (NLTHLESLHLEDNALKVLHN). Asparagine 124 is a glycosylation site (N-linked (GlcNAc...) asparagine). N-linked (GlcNAc...) asparagine glycosylation is present at asparagine 275. The LRRCT domain maps to 283-346 (GLPHVRVFLD…LNSADLDCDP (64 aa)). 2 disulfide bridges follow: cysteine 298–cysteine 323 and cysteine 300–cysteine 344. Residues 356-376 (YVFLGIVLALIGAIFLLVLYL) form a helical membrane-spanning segment. Residues 377 to 420 (NRKGIKKWMHNIRDACRDHMEGYHYRYEINADPRLTNLSSNSDV) are Cytoplasmic-facing. A Phosphoserine modification is found at serine 418.

Post-translationally, highly glycosylated.

Its subcellular location is the cell membrane. Its function is as follows. May function as an inhibitor of Wnt/beta-catenin signaling by indirectly interacting with LRP6 and blocking Wnt3a-dependent LRP6 internalization. This Macaca fascicularis (Crab-eating macaque) protein is Trophoblast glycoprotein (TPBG).